Consider the following 295-residue polypeptide: Small ribosomal subunit protein uS2 (295 aa).

Positions 232–295 are disordered; it reads RRRGTDEKPE…DEQPAAAAAE (64 aa). The segment covering 252-287 has biased composition (basic and acidic residues); that stretch reads EWERELLEEPKKSDEQPAKSDELPVKTDEQPTKSDE.

Belongs to the universal ribosomal protein uS2 family.

The chain is Small ribosomal subunit protein uS2 from Salinispora tropica (strain ATCC BAA-916 / DSM 44818 / JCM 13857 / NBRC 105044 / CNB-440).